The sequence spans 176 residues: Inorganic pyrophosphatase (176 aa).

Substrate-binding residues include Lys-30, Arg-44, and Tyr-56. Positions 66, 71, and 103 each coordinate Mg(2+). Residue Tyr-142 coordinates substrate.

The protein belongs to the PPase family. Homohexamer. Requires Mg(2+) as cofactor.

It localises to the cytoplasm. It catalyses the reaction diphosphate + H2O = 2 phosphate + H(+). Catalyzes the hydrolysis of inorganic pyrophosphate (PPi) forming two phosphate ions. This Vibrio parahaemolyticus serotype O3:K6 (strain RIMD 2210633) protein is Inorganic pyrophosphatase.